Consider the following 1006-residue polypeptide: DNA polymerase (1006 aa).

The protein belongs to the DNA polymerase type-B family. In terms of assembly, interacts with OPG148. Component of the Uracil-DNA glycosylase(UDG)-OPG148-polymerase complex; OPG148 and OPG116/UDG form a heterodimeric processivity factor that associates with OPG071 to form the processive polymerase holoenzyme.

It carries out the reaction DNA(n) + a 2'-deoxyribonucleoside 5'-triphosphate = DNA(n+1) + diphosphate. Catalyzes DNA synthesis. Acquires processivity by associating with a heterodimeric processivity factor comprised of the viral OPG148 and OPG116 proteins, thereby forming the DNA polymerase holoenzyme. Displays 3'- to 5' exonuclease activity. Might participate in viral DNA recombination. Does not perform OPG116/D4synthesis across an abasic site. This is DNA polymerase (OPG071) from Homo sapiens (Human).